We begin with the raw amino-acid sequence, 381 residues long: MIISSASDYREAARRRVPPFMFHYADGGSYAEQTLARNVSDLENIALRQRVLKDMSELDTSIELFGEKLSMPTILAPVGACGMYARRGEVQAAQAADNKGVPFTLSTVSICPIEEVAPAIKRPMWFQLYVLKDRGFMKNALERAKAAGCSTLVFTVDMPTPGARYRDMHSGMSGPYKEIRRVLQGFTHPFWAYDVGIKGKPHTLGNVSTYMGRQIGLDDYIGWLTENFDPSISWKDLEWIREFWEGPMVIKGILDPEDAKDAVRFGADGIVVSNHGGRQLDGVLSSARALPPIADAVKGDIKIIADSGIRNGLDIVRMLALGADATMLGRAFVYALGAAGRQGVENMLDIFKKEMRVAMTLTSNRTIVDIKPEALVDLSKL.

The region spanning 1-380 is the FMN hydroxy acid dehydrogenase domain; the sequence is MIISSASDYR…KPEALVDLSK (380 aa). Tyrosine 24 is a binding site for substrate. Positions 106 and 127 each coordinate FMN. Residue tyrosine 129 coordinates substrate. Threonine 155 lines the FMN pocket. Arginine 164 lines the substrate pocket. Lysine 251 contacts FMN. The active-site Proton acceptor is the histidine 275. Arginine 278 contacts substrate. 306 to 330 contacts FMN; it reads DSGIRNGLDIVRMLALGADATMLGR.

Belongs to the FMN-dependent alpha-hydroxy acid dehydrogenase family. FMN serves as cofactor.

The protein resides in the cell inner membrane. It carries out the reaction (S)-lactate + A = pyruvate + AH2. Functionally, catalyzes the conversion of L-lactate to pyruvate. Is coupled to the respiratory chain. The protein is L-lactate dehydrogenase of Haemophilus influenzae (strain 86-028NP).